The following is a 222-amino-acid chain: Methionine import system permease protein MetP (222 aa).

The ABC transmembrane type-1 domain occupies 18–212 (TYETLYMTLI…IIVFIIQIIG (195 aa)). The next 5 helical transmembrane spans lie at 25-45 (TLIS…LLFL), 73-93 (FLIL…TILG), 97-117 (ALPA…EIAL), 152-172 (ISGI…AGAI), and 195-215 (FVAT…GDLI).

This sequence belongs to the binding-protein-dependent transport system permease family. CysTW subfamily. In terms of assembly, the complex is composed of two ATP-binding proteins (MetN), two transmembrane proteins (MetP) and a solute-binding protein (MetQ).

The protein localises to the cell membrane. Functionally, part of the ABC transporter complex MetNPQ involved in methionine import. Responsible for the translocation of the substrate across the membrane. It has also been shown to be involved in methionine sulfoxide transport. The chain is Methionine import system permease protein MetP (metP) from Bacillus subtilis (strain 168).